The chain runs to 557 residues: Potassium-transporting ATPase potassium-binding subunit (557 aa).

12 consecutive transmembrane segments (helical) span residues 5–25, 63–83, 132–152, 170–190, 253–273, 283–303, 329–349, 356–376, 379–399, 416–436, 484–504, and 526–546; these read GFLL…PLGS, LSAI…MLLG, GLTV…FALI, LLRI…LFFI, FVQM…FGEV, LLWA…WAEV, VLVS…AVIA, ALGG…FGGV, GLYG…LMIG, LTAL…ALAM, LLAL…MAIA, and LFVG…FIPA.

This sequence belongs to the KdpA family. As to quaternary structure, the system is composed of three essential subunits: KdpA, KdpB and KdpC.

The protein localises to the cell inner membrane. Its function is as follows. Part of the high-affinity ATP-driven potassium transport (or Kdp) system, which catalyzes the hydrolysis of ATP coupled with the electrogenic transport of potassium into the cytoplasm. This subunit binds the periplasmic potassium ions and delivers the ions to the membrane domain of KdpB through an intramembrane tunnel. The chain is Potassium-transporting ATPase potassium-binding subunit from Escherichia coli O127:H6 (strain E2348/69 / EPEC).